A 266-amino-acid polypeptide reads, in one-letter code: Putative pyruvate, phosphate dikinase regulatory protein (266 aa).

Position 149–156 (149–156 (GVSRTSKT)) interacts with ADP.

The protein belongs to the pyruvate, phosphate/water dikinase regulatory protein family. PDRP subfamily.

The catalysed reaction is N(tele)-phospho-L-histidyl/L-threonyl-[pyruvate, phosphate dikinase] + ADP = N(tele)-phospho-L-histidyl/O-phospho-L-threonyl-[pyruvate, phosphate dikinase] + AMP + H(+). The enzyme catalyses N(tele)-phospho-L-histidyl/O-phospho-L-threonyl-[pyruvate, phosphate dikinase] + phosphate + H(+) = N(tele)-phospho-L-histidyl/L-threonyl-[pyruvate, phosphate dikinase] + diphosphate. In terms of biological role, bifunctional serine/threonine kinase and phosphorylase involved in the regulation of the pyruvate, phosphate dikinase (PPDK) by catalyzing its phosphorylation/dephosphorylation. The protein is Putative pyruvate, phosphate dikinase regulatory protein of Halothermothrix orenii (strain H 168 / OCM 544 / DSM 9562).